Consider the following 201-residue polypeptide: Peroxiredoxin 2 (201 aa).

A Thioredoxin domain is found at 3–156; that stretch reads VYLGKRAPDF…ILRSVKALQA (154 aa). Cys44 serves as the catalytic Cysteine sulfenic acid (-SOH) intermediate. Residue Arg119 participates in substrate binding.

It belongs to the peroxiredoxin family. Prx6 subfamily. As to quaternary structure, homodecamer. Pentamer of dimers that assemble into a ring structure.

It is found in the cytoplasm. The enzyme catalyses a hydroperoxide + [thioredoxin]-dithiol = an alcohol + [thioredoxin]-disulfide + H2O. Thiol-specific peroxidase that catalyzes the reduction of hydrogen peroxide and organic hydroperoxides to water and alcohols, respectively. Plays a role in cell protection against oxidative stress by detoxifying peroxides. The protein is Peroxiredoxin 2 of Picrophilus torridus (strain ATCC 700027 / DSM 9790 / JCM 10055 / NBRC 100828 / KAW 2/3).